A 456-amino-acid polypeptide reads, in one-letter code: Chromosomal replication initiator protein DnaA (456 aa).

A domain I, interacts with DnaA modulators region spans residues 1-85 (MDADLNKLWE…EIKFIIESDL (85 aa)). Residues 85 to 117 (LNNEDELNNSDNSDKNRDKNSRRNIVVNDEMSS) form a domain II region. Residues 118–334 (TLNPKYTFNS…GALIRIIAYS (217 aa)) are domain III, AAA+ region. Positions 162, 164, 165, and 166 each coordinate ATP. A domain IV, binds dsDNA region spans residues 335–456 (SLTNREVTVD…SDITKKVSQN (122 aa)).

It belongs to the DnaA family. As to quaternary structure, oligomerizes as a right-handed, spiral filament on DNA at oriC.

It localises to the cytoplasm. Functionally, plays an essential role in the initiation and regulation of chromosomal replication. ATP-DnaA binds to the origin of replication (oriC) to initiate formation of the DNA replication initiation complex once per cell cycle. Binds the DnaA box (a 9 base pair repeat at the origin) and separates the double-stranded (ds)DNA. Forms a right-handed helical filament on oriC DNA; dsDNA binds to the exterior of the filament while single-stranded (ss)DNA is stabiized in the filament's interior. The ATP-DnaA-oriC complex binds and stabilizes one strand of the AT-rich DNA unwinding element (DUE), permitting loading of DNA polymerase. After initiation quickly degrades to an ADP-DnaA complex that is not apt for DNA replication. Binds acidic phospholipids. The protein is Chromosomal replication initiator protein DnaA of Clostridium botulinum (strain Eklund 17B / Type B).